A 736-amino-acid chain; its full sequence is RNA-binding protein RMD9-like, mitochondrial (736 aa).

3 disordered regions span residues methionine 1–serine 28, proline 124–threonine 148, and asparagine 566–valine 618. A mitochondrion-targeting transit peptide spans methionine 1–asparagine 79. Residues arginine 125 to glycine 140 are compositionally biased toward low complexity. Residues asparagine 566–valine 578 show a composition bias toward polar residues. Low complexity predominate over residues asparagine 579–isoleucine 596. Residues leucine 602 to tryptophan 613 show a composition bias toward polar residues.

Belongs to the RMD9 family. Monomer. In terms of processing, phosphorylated. Phosphorylation promotes binding to RNA.

It localises to the mitochondrion inner membrane. In terms of biological role, may be involved in the processing or stability of mitochondrial mRNAs. This Candida glabrata (strain ATCC 2001 / BCRC 20586 / JCM 3761 / NBRC 0622 / NRRL Y-65 / CBS 138) (Yeast) protein is RNA-binding protein RMD9-like, mitochondrial.